The primary structure comprises 248 residues: Probable N-acetylglucosaminyl-phosphatidylinositol de-N-acetylase (248 aa).

The Lumenal segment spans residues 1 to 7; sequence MIWFWST. Residues 8-24 form a helical membrane-spanning segment; the sequence is LLVTAIAVLSTANESSS. Residues 25-248 lie on the Cytoplasmic side of the membrane; the sequence is GQEKLAVESI…MSNNVLKRAT (224 aa).

Belongs to the PIGL family.

The protein localises to the endoplasmic reticulum membrane. It catalyses the reaction a 6-(N-acetyl-alpha-D-glucosaminyl)-1-(1,2-diacyl-sn-glycero-3-phospho)-1D-myo-inositol + H2O = a 6-(alpha-D-glucosaminyl)-1-(1,2-diacyl-sn-glycero-3-phospho)-1D-myo-inositol + acetate. It functions in the pathway glycolipid biosynthesis; glycosylphosphatidylinositol-anchor biosynthesis. In terms of biological role, involved in the second step of GPI biosynthesis. De-N-acetylation of N-acetylglucosaminyl-phosphatidylinositol. The polypeptide is Probable N-acetylglucosaminyl-phosphatidylinositol de-N-acetylase (gpi12) (Schizosaccharomyces pombe (strain 972 / ATCC 24843) (Fission yeast)).